A 459-amino-acid chain; its full sequence is Zinc finger and BTB domain-containing protein 9 (459 aa).

The BTB domain occupies 48–112 (CDVSLLVQGR…IYSGSLHLPL (65 aa)). The span at 178-189 (VRSSASTENSVL) shows a compositional bias: polar residues. 2 disordered regions span residues 178 to 200 (VRSS…EGSE) and 212 to 274 (EEEE…ASQI). Glycyl lysine isopeptide (Lys-Gly) (interchain with G-Cter in SUMO2) cross-links involve residues Lys-285, Lys-293, and Lys-368. Positions 293-356 (KEKTKVLSGE…GGTGQAMHGP (64 aa)) are disordered. A C2H2-type 1 zinc finger spans residues 397–419 (FGCGICNKRFKLKHHLTEHMKTH). The segment at 424-446 (HACPHCGRRFRVQAFFLRHRDLC) adopts a C2H2-type 2; atypical zinc-finger fold.

Its subcellular location is the nucleus. In terms of biological role, may be involved in transcriptional regulation. This Mus musculus (Mouse) protein is Zinc finger and BTB domain-containing protein 9 (Zbtb9).